The chain runs to 248 residues: 3-oxoacyl-[acyl-carrier-protein] reductase FabG (248 aa).

Residues G14–R17, D65–V66, and N92 each bind NADP(+). S144 is a binding site for substrate. Y157 serves as the catalytic Proton acceptor. Residues Y157–K161 and I190 each bind NADP(+).

It belongs to the short-chain dehydrogenases/reductases (SDR) family. As to quaternary structure, homotetramer.

It carries out the reaction a (3R)-hydroxyacyl-[ACP] + NADP(+) = a 3-oxoacyl-[ACP] + NADPH + H(+). The protein operates within lipid metabolism; fatty acid biosynthesis. In terms of biological role, catalyzes the NADPH-dependent reduction of beta-ketoacyl-ACP substrates to beta-hydroxyacyl-ACP products, the first reductive step in the elongation cycle of fatty acid biosynthesis. The chain is 3-oxoacyl-[acyl-carrier-protein] reductase FabG (fabG) from Chlamydia muridarum (strain MoPn / Nigg).